Here is a 218-residue protein sequence, read N- to C-terminus: Ribose-5-phosphate isomerase A (218 aa).

Substrate-binding positions include 28–31 (TGST), 81–84 (DGAD), and 94–97 (KGGG). Catalysis depends on glutamate 103, which acts as the Proton acceptor. Lysine 121 contributes to the substrate binding site.

Belongs to the ribose 5-phosphate isomerase family. As to quaternary structure, homodimer.

The catalysed reaction is aldehydo-D-ribose 5-phosphate = D-ribulose 5-phosphate. It functions in the pathway carbohydrate degradation; pentose phosphate pathway; D-ribose 5-phosphate from D-ribulose 5-phosphate (non-oxidative stage): step 1/1. Catalyzes the reversible conversion of ribose-5-phosphate to ribulose 5-phosphate. In Vibrio parahaemolyticus serotype O3:K6 (strain RIMD 2210633), this protein is Ribose-5-phosphate isomerase A.